We begin with the raw amino-acid sequence, 432 residues long: Probable exopolygalacturonase C (432 aa).

The signal sequence occupies residues 1 to 20 (MPISKGIFLSLLSTLPLALA). 4 N-linked (GlcNAc...) asparagine glycosylation sites follow: asparagine 33, asparagine 73, asparagine 90, and asparagine 140. 2 PbH1 repeats span residues 206–227 (GTNI…AVGS) and 229–250 (SHDI…SIGS). Catalysis depends on aspartate 220, which acts as the Proton donor. Histidine 244 is an active-site residue. N-linked (GlcNAc...) asparagine glycosylation is present at asparagine 260. The PbH1 3 repeat unit spans residues 261–282 (ITNLRFEDVTVIDALYAARFKS). Asparagine 292 and asparagine 302 each carry an N-linked (GlcNAc...) asparagine glycan. Cysteines 377 and 383 form a disulfide. N-linked (GlcNAc...) asparagine glycosylation occurs at asparagine 407.

Belongs to the glycosyl hydrolase 28 family.

It localises to the secreted. The catalysed reaction is [(1-&gt;4)-alpha-D-galacturonosyl](n) + H2O = alpha-D-galacturonate + [(1-&gt;4)-alpha-D-galacturonosyl](n-1). In terms of biological role, specific in hydrolyzing the terminal glycosidic bond of polygalacturonic acid and oligogalacturonates. This Aspergillus terreus (strain NIH 2624 / FGSC A1156) protein is Probable exopolygalacturonase C (pgxC).